We begin with the raw amino-acid sequence, 169 residues long: X polypeptide (169 aa).

This sequence belongs to the IagB/IpgF/P19 family.

The polypeptide is X polypeptide (X) (Escherichia coli).